Reading from the N-terminus, the 214-residue chain is Adenylate kinase (214 aa).

An ATP-binding site is contributed by 10 to 15 (GAGKGT). Positions 30 to 59 (STGDMLRGAIKAGTDLGKQAKTLMDAGQLV) are NMP. Residues Thr31, Arg36, 57 to 59 (QLV), 85 to 88 (GFPR), and Gln92 contribute to the AMP site. An LID region spans residues 122-159 (GRRVHQASGRTYHVVYNPPKVEGKDDVTGEDLIIRADD). Residues Arg123 and 132–133 (TY) contribute to the ATP site. AMP contacts are provided by Arg156 and Arg167. Position 200 (Lys200) interacts with ATP.

The protein belongs to the adenylate kinase family. Monomer.

It localises to the cytoplasm. The catalysed reaction is AMP + ATP = 2 ADP. Its pathway is purine metabolism; AMP biosynthesis via salvage pathway; AMP from ADP: step 1/1. Its function is as follows. Catalyzes the reversible transfer of the terminal phosphate group between ATP and AMP. Plays an important role in cellular energy homeostasis and in adenine nucleotide metabolism. The protein is Adenylate kinase of Pasteurella multocida (strain Pm70).